The sequence spans 142 residues: Hemoglobin subunit alpha-1 (142 aa).

Ser-1 carries the N-acetylserine modification. The region spanning 1–142 is the Globin domain; the sequence is SLSDKDKAAV…VALALAQRYR (142 aa). Residue His-59 participates in O2 binding. A heme b-binding site is contributed by His-88.

It belongs to the globin family. In terms of assembly, hb1 is a heterotetramer of two alpha-2 chains and two beta chains. In terms of tissue distribution, red blood cells.

Involved in oxygen transport from gills to the various peripheral tissues. The chain is Hemoglobin subunit alpha-1 (hba1) from Notothenia neglecta (Yellowbelly rockcod).